A 621-amino-acid polypeptide reads, in one-letter code: Chaperone protein HtpG (621 aa).

Residues 1–328 (MTQEKKKFDA…SEDLPLNISR (328 aa)) are a; substrate-binding. A b region spans residues 329 to 544 (ESLQHNNVLE…DTAMDIRMER (216 aa)). A c region spans residues 545–621 (FLIEQKQIAN…LNDILQKAIL (77 aa)).

This sequence belongs to the heat shock protein 90 family. Homodimer.

It is found in the cytoplasm. Functionally, molecular chaperone. Has ATPase activity. The chain is Chaperone protein HtpG from Rickettsia prowazekii (strain Madrid E).